We begin with the raw amino-acid sequence, 259 residues long: Chloroplastic import inner membrane translocase subunit HP30-2 (259 aa).

Transmembrane regions (helical) follow at residues 55-75 (AVVTAMGGVQGAFIGGLMGTL), 108-124 (NFAAITGVNAGIACVMK), 135-155 (AVVAAFGSGVAYSLVSAGLQG), and 158-178 (MNAITTAAGFAVFQGVFFKLG).

This sequence belongs to the Tim17/Tim22/Tim23 family. As to quaternary structure, probable component of a protein-conducting channel made of HP30-1, HP30-2 and HP20 that mediates the import of transit sequence-less proteins into the chloroplastic inner membrane. Interacts with CEQORH.

The protein localises to the mitochondrion membrane. Its subcellular location is the plastid. It is found in the chloroplast inner membrane. Together with HP30-1 and HP20, triggers the import and insertion of transit sequence-less multi-pass transmembrane proteins (e.g. CEQORH) into the chloroplastic inner membrane. The chain is Chloroplastic import inner membrane translocase subunit HP30-2 from Arabidopsis thaliana (Mouse-ear cress).